An 89-amino-acid chain; its full sequence is Small ribosomal subunit protein uS15 (89 aa).

This sequence belongs to the universal ribosomal protein uS15 family. In terms of assembly, part of the 30S ribosomal subunit. Forms a bridge to the 50S subunit in the 70S ribosome, contacting the 23S rRNA.

Its function is as follows. One of the primary rRNA binding proteins, it binds directly to 16S rRNA where it helps nucleate assembly of the platform of the 30S subunit by binding and bridging several RNA helices of the 16S rRNA. Forms an intersubunit bridge (bridge B4) with the 23S rRNA of the 50S subunit in the ribosome. The chain is Small ribosomal subunit protein uS15 from Phocaeicola vulgatus (strain ATCC 8482 / DSM 1447 / JCM 5826 / CCUG 4940 / NBRC 14291 / NCTC 11154) (Bacteroides vulgatus).